A 140-amino-acid polypeptide reads, in one-letter code: Anti-sigma F factor (140 aa).

This sequence belongs to the anti-sigma-factor family.

The catalysed reaction is L-seryl-[protein] + ATP = O-phospho-L-seryl-[protein] + ADP + H(+). It catalyses the reaction L-threonyl-[protein] + ATP = O-phospho-L-threonyl-[protein] + ADP + H(+). Binds to sigma F and blocks its ability to form an RNA polymerase holoenzyme (E-sigma F). Phosphorylates SpoIIAA on a serine residue. This phosphorylation may enable SpoIIAA to act as an anti-anti-sigma factor that counteracts SpoIIAB and thus releases sigma F from inhibition. The chain is Anti-sigma F factor from Clostridium perfringens (strain SM101 / Type A).